We begin with the raw amino-acid sequence, 327 residues long: Glycerol-3-phosphate dehydrogenase [NAD(P)+] (327 aa).

NADPH-binding residues include phenylalanine 13, arginine 34, and lysine 107. Sn-glycerol 3-phosphate-binding residues include lysine 107 and glycine 135. Position 139 (alanine 139) interacts with NADPH. Sn-glycerol 3-phosphate is bound by residues lysine 190, aspartate 243, serine 253, arginine 254, and asparagine 255. Lysine 190 functions as the Proton acceptor in the catalytic mechanism. Arginine 254 is an NADPH binding site. NADPH-binding residues include valine 276 and glutamate 277.

It belongs to the NAD-dependent glycerol-3-phosphate dehydrogenase family.

The protein resides in the cytoplasm. The catalysed reaction is sn-glycerol 3-phosphate + NAD(+) = dihydroxyacetone phosphate + NADH + H(+). The enzyme catalyses sn-glycerol 3-phosphate + NADP(+) = dihydroxyacetone phosphate + NADPH + H(+). The protein operates within membrane lipid metabolism; glycerophospholipid metabolism. Functionally, catalyzes the reduction of the glycolytic intermediate dihydroxyacetone phosphate (DHAP) to sn-glycerol 3-phosphate (G3P), the key precursor for phospholipid synthesis. The protein is Glycerol-3-phosphate dehydrogenase [NAD(P)+] of Rhizobium etli (strain CIAT 652).